The chain runs to 187 residues: Benzene 1,2-dioxygenase subunit beta (187 aa).

This sequence belongs to the bacterial ring-hydroxylating dioxygenase beta subunit family. This dioxygenase system consists of four proteins: the two subunits of the hydroxylase component (BedC1 and BedC2), a ferredoxin (BedB) and a ferredoxin reductase (BedA).

It catalyses the reaction benzene + NADH + O2 + H(+) = cis-1,2-dihydrobenzene-1,2-diol + NAD(+). It participates in aromatic compound metabolism; benzene degradation; catechol from benzene: step 1/2. In terms of biological role, the beta subunit may be responsible for the substrate specificity of the enzyme. In Pseudomonas putida (Arthrobacter siderocapsulatus), this protein is Benzene 1,2-dioxygenase subunit beta (bedC2).